A 349-amino-acid polypeptide reads, in one-letter code: Probable tRNA pseudouridine synthase B (349 aa).

Residue D41 is the Nucleophile of the active site. The PUA domain maps to 207 to 279 (YPKVIVKETA…KVIDIDNVLI (73 aa)). The span at 300-309 (IPVQKPERKL) shows a compositional bias: basic and acidic residues. Residues 300-349 (IPVQKPERKLHGNLQGSQEWKDTGNRGNPKRGGTGSKGFSSGFRKRKAKR) are disordered.

It belongs to the pseudouridine synthase TruB family. Type 2 subfamily.

The catalysed reaction is uridine(55) in tRNA = pseudouridine(55) in tRNA. Could be responsible for synthesis of pseudouridine from uracil-55 in the psi GC loop of transfer RNAs. This Picrophilus torridus (strain ATCC 700027 / DSM 9790 / JCM 10055 / NBRC 100828 / KAW 2/3) protein is Probable tRNA pseudouridine synthase B.